A 280-amino-acid polypeptide reads, in one-letter code: ATP synthase gamma chain (280 aa).

This sequence belongs to the ATPase gamma chain family. As to quaternary structure, F-type ATPases have 2 components, CF(1) - the catalytic core - and CF(0) - the membrane proton channel. CF(1) has five subunits: alpha(3), beta(3), gamma(1), delta(1), epsilon(1). CF(0) has three main subunits: a, b and c.

The protein resides in the cell membrane. Its function is as follows. Produces ATP from ADP in the presence of a proton gradient across the membrane. The gamma chain is believed to be important in regulating ATPase activity and the flow of protons through the CF(0) complex. The protein is ATP synthase gamma chain of Mycoplasma mycoides subsp. mycoides SC (strain CCUG 32753 / NCTC 10114 / PG1).